The chain runs to 381 residues: Succinyl-diaminopimelate desuccinylase (381 aa).

Zn(2+) is bound at residue His68. Residue Asp70 is part of the active site. Position 101 (Asp101) interacts with Zn(2+). The Proton acceptor role is filled by Glu135. Zn(2+) is bound by residues Glu136, Glu164, and His350.

Belongs to the peptidase M20A family. DapE subfamily. Homodimer. The cofactor is Zn(2+). Requires Co(2+) as cofactor.

It carries out the reaction N-succinyl-(2S,6S)-2,6-diaminopimelate + H2O = (2S,6S)-2,6-diaminopimelate + succinate. It participates in amino-acid biosynthesis; L-lysine biosynthesis via DAP pathway; LL-2,6-diaminopimelate from (S)-tetrahydrodipicolinate (succinylase route): step 3/3. Catalyzes the hydrolysis of N-succinyl-L,L-diaminopimelic acid (SDAP), forming succinate and LL-2,6-diaminopimelate (DAP), an intermediate involved in the bacterial biosynthesis of lysine and meso-diaminopimelic acid, an essential component of bacterial cell walls. The polypeptide is Succinyl-diaminopimelate desuccinylase (dapE) (Neisseria meningitidis serogroup B (strain ATCC BAA-335 / MC58)).